The chain runs to 386 residues: Agamous-like MADS-box protein AGL30 (386 aa).

One can recognise an MADS-box domain in the interval 1–53 (MGRVKLKIKKLENTNGRQSTFAKRKNGILKKANELSILCDIDIVLLMFSPTGK). The disordered stretch occupies residues 341–360 (PDSSAYNDNTNQTRFGSSSS). Polar residues predominate over residues 344–356 (SAYNDNTNQTRFG).

In terms of assembly, forms heterodimers with AGL66 and AGL104. As to expression, expressed in pollen.

It is found in the nucleus. Probable transcription factor that forms heterodimers with the MADS-box proteins AGL66 and AGL104 and is involved in the regulation of pollen maturation at the late stages of pollen development and pollen tube growth. The protein is Agamous-like MADS-box protein AGL30 of Arabidopsis thaliana (Mouse-ear cress).